The chain runs to 110 residues: MAITEVFTHKQPLGNSDPAHTAYGPGELTASTPAMTPLMLDATSGKLTVWDGAHAGAATGILAVTADQNSAELAFYKSGSFRIEDVLWPSAVTDENIKRNAFAGTAISIV.

The tract at residues methionine 1–glutamate 27 is disordered.

It localises to the virion. In terms of biological role, putative decoration protein. This is Putative decoration protein from Escherichia coli (Bacteriophage N15).